The chain runs to 287 residues: 4-hydroxybenzoate octaprenyltransferase (287 aa).

9 helical membrane-spanning segments follow: residues 21–41 (VGIF…AKGA), 44–64 (FKIA…GCIV), 91–111 (VTEA…LVLL), 112–132 (LNRL…VYPF), 139–159 (LPQL…FAAT), 160–180 (VGHV…WPIV), 211–231 (LMIG…GWYL), 235–255 (YWFY…QFLI), and 263–283 (CFAA…GILL).

The protein belongs to the UbiA prenyltransferase family. It depends on Mg(2+) as a cofactor.

It is found in the cell inner membrane. The catalysed reaction is all-trans-octaprenyl diphosphate + 4-hydroxybenzoate = 4-hydroxy-3-(all-trans-octaprenyl)benzoate + diphosphate. The protein operates within cofactor biosynthesis; ubiquinone biosynthesis. Functionally, catalyzes the prenylation of para-hydroxybenzoate (PHB) with an all-trans polyprenyl group. Mediates the second step in the final reaction sequence of ubiquinone-8 (UQ-8) biosynthesis, which is the condensation of the polyisoprenoid side chain with PHB, generating the first membrane-bound Q intermediate 3-octaprenyl-4-hydroxybenzoate. In Coxiella burnetii (strain RSA 331 / Henzerling II), this protein is 4-hydroxybenzoate octaprenyltransferase.